The sequence spans 104 residues: Large ribosomal subunit protein uL24 (104 aa).

Over residues 85–96 the composition is skewed to basic and acidic residues; the sequence is IKRELGAKEKAR. Residues 85-104 are disordered; it reads IKRELGAKEKARADRRKTAK.

Belongs to the universal ribosomal protein uL24 family. As to quaternary structure, part of the 50S ribosomal subunit.

One of two assembly initiator proteins, it binds directly to the 5'-end of the 23S rRNA, where it nucleates assembly of the 50S subunit. Functionally, one of the proteins that surrounds the polypeptide exit tunnel on the outside of the subunit. The chain is Large ribosomal subunit protein uL24 from Anaeromyxobacter sp. (strain Fw109-5).